We begin with the raw amino-acid sequence, 106 residues long: Halilectin 3, beta chain (106 aa).

Asparagine 65 is a glycosylation site (N-linked (GlcNAc...) asparagine).

Probable heterotrimer consisting of an alpha chain and two beta chains. The alpha chain can probably have different glycosylation states. Glycosylated.

Functionally, lectin with affinity for N-acetyl-galactosamine, carragenan and glycoprotein porcine stomach mucin (PSM). Has metal-independent hemagglutinating activity towards erythrocytes from rabbit and human. Hemagglutinating activity is not inhibited by D-galactose, D-glucose, D-mannose, D-fucose, methyl-alpha-D-galactopyranoside, methyl-alpha-D-glucopyranoside, N-acetyl-glucosamine, N-acetyl-mannosamine, D-fructose, alpha-D-lactose, beta-D-lactose, D-lactulose, D-sucrose, fucoidan or glycoproteins thyroglobulin and ovalmucoid. The chain is Halilectin 3, beta chain from Haliclona caerulea (Blue Caribbean sponge).